The following is a 759-amino-acid chain: 1,4-alpha-glucan branching enzyme GlgB (759 aa).

The Nucleophile role is filled by aspartate 431. The active-site Proton donor is glutamate 484.

It belongs to the glycosyl hydrolase 13 family. GlgB subfamily. In terms of assembly, monomer.

It carries out the reaction Transfers a segment of a (1-&gt;4)-alpha-D-glucan chain to a primary hydroxy group in a similar glucan chain.. The protein operates within glycan biosynthesis; glycogen biosynthesis. Its function is as follows. Catalyzes the formation of the alpha-1,6-glucosidic linkages in glycogen by scission of a 1,4-alpha-linked oligosaccharide from growing alpha-1,4-glucan chains and the subsequent attachment of the oligosaccharide to the alpha-1,6 position. This chain is 1,4-alpha-glucan branching enzyme GlgB, found in Prochlorococcus marinus (strain MIT 9211).